We begin with the raw amino-acid sequence, 142 residues long: Large-conductance mechanosensitive channel (142 aa).

A run of 3 helical transmembrane segments spans residues 10 to 30, 40 to 60, and 86 to 106; these read FAVKGNVVDLAVGVIIGGAFG, LIMPVVGLVFGKLDFSNLFVV, and GNFITVAVNFIILAFIIFMMV.

The protein belongs to the MscL family. Homopentamer.

Its subcellular location is the cell inner membrane. Functionally, channel that opens in response to stretch forces in the membrane lipid bilayer. May participate in the regulation of osmotic pressure changes within the cell. This Delftia acidovorans (strain DSM 14801 / SPH-1) protein is Large-conductance mechanosensitive channel.